The chain runs to 461 residues: MGKENAVSGNSIPIHGRPVTRALASALRASSKLITSSEVAATTQNQGRVLRAKSKRTALDEKKANAPKKRAVLKDITNVTCENSYTSCFSVAVENIKQIKKGRQSSSSSKVASSSATSQVTDAKVEVVSNSAGASLSVFTDTSLGTNETSYSIIAKPSSRSPPRPFGTVERSCGGASSPKFVDIDSDDKDPLLCSLYAPDIYYNLRVAELKRRPFPDFMEKTQRDVTETMRGILVDWLVEVSEEYTLVPDTLYLTVYLIDWFLHGNYVERQRLQLLGITCMLIASKYEEIHAPRIEEFCFITDNTYTRDQVLEMESQVLKHFSFQIYTPTSKTFLRRFLRAAQVSFPNQSLEMEFLANYLTELTLMDYPFLKFLPSIIAASAVFLAKWTLNQSSHPWNPTLEHYTTYKASDLKASVHALQDLQLNTKGCSLNSIRMKYRQDKFKSVAVFSSGELPDKLFIS.

This sequence belongs to the cyclin family. Cyclin AB subfamily.

This is Cyclin-A2-4 (CYCA2-4) from Arabidopsis thaliana (Mouse-ear cress).